A 405-amino-acid chain; its full sequence is Argininosuccinate synthase (405 aa).

12-20 (AYSGGLDTS) lines the ATP pocket. Residues Tyr92 and Ser97 each contribute to the L-citrulline site. Residue Gly122 coordinates ATP. The L-aspartate site is built by Thr124, Asn128, and Asp129. Asn128 lines the L-citrulline pocket. 5 residues coordinate L-citrulline: Arg132, Ser181, Ser190, Glu266, and Tyr278.

It belongs to the argininosuccinate synthase family. Type 1 subfamily. In terms of assembly, homotetramer.

Its subcellular location is the cytoplasm. It carries out the reaction L-citrulline + L-aspartate + ATP = 2-(N(omega)-L-arginino)succinate + AMP + diphosphate + H(+). It functions in the pathway amino-acid biosynthesis; L-arginine biosynthesis; L-arginine from L-ornithine and carbamoyl phosphate: step 2/3. This Cronobacter sakazakii (strain ATCC BAA-894) (Enterobacter sakazakii) protein is Argininosuccinate synthase.